The sequence spans 203 residues: uncharacterized protein (203 aa).

Residues 180-200 (VYLLLFGIPLLILIFLIIFFI) form a helical membrane-spanning segment.

Its subcellular location is the virion. It is found in the host membrane. This is an uncharacterized protein from Acanthamoeba polyphaga (Amoeba).